The chain runs to 445 residues: N-succinylarginine dihydrolase (445 aa).

Residues 19-28 (AGLSYGNVAS), asparagine 110, and 137-138 (HR) contribute to the substrate site. The active site involves glutamate 174. A substrate-binding site is contributed by arginine 214. The active site involves histidine 250. Positions 252 and 363 each coordinate substrate. Residue cysteine 369 is the Nucleophile of the active site.

It belongs to the succinylarginine dihydrolase family. Homodimer.

It catalyses the reaction N(2)-succinyl-L-arginine + 2 H2O + 2 H(+) = N(2)-succinyl-L-ornithine + 2 NH4(+) + CO2. It participates in amino-acid degradation; L-arginine degradation via AST pathway; L-glutamate and succinate from L-arginine: step 2/5. Catalyzes the hydrolysis of N(2)-succinylarginine into N(2)-succinylornithine, ammonia and CO(2). This Aeromonas hydrophila subsp. hydrophila (strain ATCC 7966 / DSM 30187 / BCRC 13018 / CCUG 14551 / JCM 1027 / KCTC 2358 / NCIMB 9240 / NCTC 8049) protein is N-succinylarginine dihydrolase.